The primary structure comprises 75 residues: Exodeoxyribonuclease 7 small subunit (75 aa).

The protein belongs to the XseB family. Heterooligomer composed of large and small subunits.

It localises to the cytoplasm. The catalysed reaction is Exonucleolytic cleavage in either 5'- to 3'- or 3'- to 5'-direction to yield nucleoside 5'-phosphates.. Its function is as follows. Bidirectionally degrades single-stranded DNA into large acid-insoluble oligonucleotides, which are then degraded further into small acid-soluble oligonucleotides. This Elusimicrobium minutum (strain Pei191) protein is Exodeoxyribonuclease 7 small subunit.